The chain runs to 128 residues: Holo-[acyl-carrier-protein] synthase (128 aa).

Mg(2+) contacts are provided by Asp-8 and Glu-59.

The protein belongs to the P-Pant transferase superfamily. AcpS family. Mg(2+) is required as a cofactor.

It localises to the cytoplasm. The catalysed reaction is apo-[ACP] + CoA = holo-[ACP] + adenosine 3',5'-bisphosphate + H(+). Transfers the 4'-phosphopantetheine moiety from coenzyme A to a Ser of acyl-carrier-protein. The chain is Holo-[acyl-carrier-protein] synthase from Rickettsia typhi (strain ATCC VR-144 / Wilmington).